A 145-amino-acid chain; its full sequence is uncharacterized protein (145 aa).

The tract at residues glycine 37–proline 123 is disordered. A compositionally biased stretch (polar residues) spans lysine 38–glutamine 63.

This is an uncharacterized protein from Caenorhabditis elegans.